Consider the following 206-residue polypeptide: Imidazole glycerol phosphate synthase subunit HisH (206 aa).

Residues 1 to 206 (MIVIIDYGMG…LRILKNFGDM (206 aa)) enclose the Glutamine amidotransferase type-1 domain. The active-site Nucleophile is the Cys-79. Residues His-188 and Glu-190 contribute to the active site.

In terms of assembly, heterodimer of HisH and HisF.

It is found in the cytoplasm. It carries out the reaction 5-[(5-phospho-1-deoxy-D-ribulos-1-ylimino)methylamino]-1-(5-phospho-beta-D-ribosyl)imidazole-4-carboxamide + L-glutamine = D-erythro-1-(imidazol-4-yl)glycerol 3-phosphate + 5-amino-1-(5-phospho-beta-D-ribosyl)imidazole-4-carboxamide + L-glutamate + H(+). The catalysed reaction is L-glutamine + H2O = L-glutamate + NH4(+). It participates in amino-acid biosynthesis; L-histidine biosynthesis; L-histidine from 5-phospho-alpha-D-ribose 1-diphosphate: step 5/9. Its function is as follows. IGPS catalyzes the conversion of PRFAR and glutamine to IGP, AICAR and glutamate. The HisH subunit catalyzes the hydrolysis of glutamine to glutamate and ammonia as part of the synthesis of IGP and AICAR. The resulting ammonia molecule is channeled to the active site of HisF. The protein is Imidazole glycerol phosphate synthase subunit HisH of Syntrophotalea carbinolica (strain DSM 2380 / NBRC 103641 / GraBd1) (Pelobacter carbinolicus).